Consider the following 44-residue polypeptide: Defensin-like protein 1 (44 aa).

The residue at position 1 (glutamine 1) is a Pyrrolidone carboxylic acid. The cysteines at positions 15 and 36 are disulfide-linked.

The protein belongs to the DEFL family. In terms of assembly, forms oligomers in its native state.

Its subcellular location is the secreted. Functionally, possesses antifungal activity sensitive to inorganic cations. This Brassica napus (Rape) protein is Defensin-like protein 1 (AFP1).